The primary structure comprises 423 residues: Serine--tRNA ligase (423 aa).

Position 231–233 (231–233) interacts with L-serine; the sequence is TGE. 262–264 is a binding site for ATP; that stretch reads RSE. Glu-285 is an L-serine binding site. 349-352 contributes to the ATP binding site; sequence EISS. Ser-385 contacts L-serine.

This sequence belongs to the class-II aminoacyl-tRNA synthetase family. Type-1 seryl-tRNA synthetase subfamily. In terms of assembly, homodimer. The tRNA molecule binds across the dimer.

It is found in the cytoplasm. It catalyses the reaction tRNA(Ser) + L-serine + ATP = L-seryl-tRNA(Ser) + AMP + diphosphate + H(+). It carries out the reaction tRNA(Sec) + L-serine + ATP = L-seryl-tRNA(Sec) + AMP + diphosphate + H(+). Its pathway is aminoacyl-tRNA biosynthesis; selenocysteinyl-tRNA(Sec) biosynthesis; L-seryl-tRNA(Sec) from L-serine and tRNA(Sec): step 1/1. Functionally, catalyzes the attachment of serine to tRNA(Ser). Is also able to aminoacylate tRNA(Sec) with serine, to form the misacylated tRNA L-seryl-tRNA(Sec), which will be further converted into selenocysteinyl-tRNA(Sec). In Coxiella burnetii (strain RSA 331 / Henzerling II), this protein is Serine--tRNA ligase.